We begin with the raw amino-acid sequence, 62 residues long: Photosystem II reaction center protein Z (62 aa).

2 helical membrane-spanning segments follow: residues 8–28 and 41–61; these read ALLLLVVMSFVLIVGVPVLYA and LVGGLAWTALVVLVGVLNYFV.

It belongs to the PsbZ family. PSII is composed of 1 copy each of membrane proteins PsbA, PsbB, PsbC, PsbD, PsbE, PsbF, PsbH, PsbI, PsbJ, PsbK, PsbL, PsbM, PsbT, PsbX, PsbY, PsbZ, Psb30/Ycf12, peripheral proteins PsbO, CyanoQ (PsbQ), PsbU, PsbV and a large number of cofactors. It forms dimeric complexes.

It is found in the cellular thylakoid membrane. May control the interaction of photosystem II (PSII) cores with the light-harvesting antenna, regulates electron flow through the 2 photosystem reaction centers. PSII is a light-driven water plastoquinone oxidoreductase, using light energy to abstract electrons from H(2)O, generating a proton gradient subsequently used for ATP formation. The chain is Photosystem II reaction center protein Z from Synechococcus elongatus (strain ATCC 33912 / PCC 7942 / FACHB-805) (Anacystis nidulans R2).